The sequence spans 204 residues: tRNA (pseudouridine(54)-N(1))-methyltransferase (204 aa).

S-adenosyl-L-methionine contacts are provided by residues Leu-130, Gly-157, 180 to 185, and Cys-190; that span reads LSPLEL.

It belongs to the methyltransferase superfamily. TrmY family. In terms of assembly, homodimer.

The protein resides in the cytoplasm. The enzyme catalyses pseudouridine(54) in tRNA + S-adenosyl-L-methionine = N(1)-methylpseudouridine(54) in tRNA + S-adenosyl-L-homocysteine + H(+). Specifically catalyzes the N1-methylation of pseudouridine at position 54 (Psi54) in tRNAs. This Methanococcus aeolicus (strain ATCC BAA-1280 / DSM 17508 / OCM 812 / Nankai-3) protein is tRNA (pseudouridine(54)-N(1))-methyltransferase.